A 40-amino-acid chain; its full sequence is Cytolysin EnT (40 aa).

The segment at 3–12 (ALAGTIIEGA) is plays an important role in the hemolytic activity. The interval 11–30 (GASLTFSVLTTILDALGSVS) is N-terminal region.

The protein belongs to the actinoporin family. Sea anemone subfamily. Octamer or nonamer in membranes. Monomer in the soluble state.

The protein resides in the secreted. Its subcellular location is the nematocyst. The protein localises to the target cell membrane. Pore-forming protein that forms cations-selective hydrophilic pores of around 1 nm and causes cytolysis. Pore formation is a multi-step process that involves specific recognition of membrane sphingomyelin (but neither cholesterol nor phosphatidylcholine) using aromatic rich region and adjacent phosphocholine (POC) binding site, firm binding to the membrane (mainly driven by hydrophobic interactions) accompanied by the transfer of the N-terminal region to the lipid-water interface and finally pore formation after oligomerization of monomers. This toxin shows hemolytic activities. This is Cytolysin EnT from Entacmaea quadricolor (Bubble-tip anemone).